A 627-amino-acid chain; its full sequence is 1-deoxy-D-xylulose-5-phosphate synthase (627 aa).

Residues His80 and 121-123 (GHS) contribute to the thiamine diphosphate site. Asp152 contributes to the Mg(2+) binding site. Residues 153-154 (GA), Asn181, Tyr288, and Glu370 contribute to the thiamine diphosphate site. A Mg(2+)-binding site is contributed by Asn181.

This sequence belongs to the transketolase family. DXPS subfamily. In terms of assembly, homodimer. It depends on Mg(2+) as a cofactor. The cofactor is thiamine diphosphate.

It carries out the reaction D-glyceraldehyde 3-phosphate + pyruvate + H(+) = 1-deoxy-D-xylulose 5-phosphate + CO2. Its pathway is metabolic intermediate biosynthesis; 1-deoxy-D-xylulose 5-phosphate biosynthesis; 1-deoxy-D-xylulose 5-phosphate from D-glyceraldehyde 3-phosphate and pyruvate: step 1/1. Its function is as follows. Catalyzes the acyloin condensation reaction between C atoms 2 and 3 of pyruvate and glyceraldehyde 3-phosphate to yield 1-deoxy-D-xylulose-5-phosphate (DXP). In Aliivibrio salmonicida (strain LFI1238) (Vibrio salmonicida (strain LFI1238)), this protein is 1-deoxy-D-xylulose-5-phosphate synthase.